The primary structure comprises 364 residues: 1-aminocyclopropane-1-carboxylate oxidase homolog 11 (364 aa).

In terms of domain architecture, Fe2OG dioxygenase spans 213 to 312 (KSLLMICHYY…RISVASFFSS (100 aa)). Fe cation is bound by residues histidine 237, aspartate 239, and histidine 293. Arginine 303 lines the 2-oxoglutarate pocket.

It belongs to the iron/ascorbate-dependent oxidoreductase family. Fe(2+) is required as a cofactor.

The polypeptide is 1-aminocyclopropane-1-carboxylate oxidase homolog 11 (Arabidopsis thaliana (Mouse-ear cress)).